The chain runs to 97 residues: Large ribosomal subunit protein bL28 (97 aa).

The protein belongs to the bacterial ribosomal protein bL28 family.

The protein is Large ribosomal subunit protein bL28 of Sphingopyxis alaskensis (strain DSM 13593 / LMG 18877 / RB2256) (Sphingomonas alaskensis).